The following is a 152-amino-acid chain: Ribosomal RNA large subunit methyltransferase H (152 aa).

S-adenosyl-L-methionine is bound by residues L68, G100, and 119–124 (FGPMTW).

Belongs to the RNA methyltransferase RlmH family. Homodimer.

The protein localises to the cytoplasm. The enzyme catalyses pseudouridine(1915) in 23S rRNA + S-adenosyl-L-methionine = N(3)-methylpseudouridine(1915) in 23S rRNA + S-adenosyl-L-homocysteine + H(+). Functionally, specifically methylates the pseudouridine at position 1915 (m3Psi1915) in 23S rRNA. The polypeptide is Ribosomal RNA large subunit methyltransferase H (Rhodospirillum centenum (strain ATCC 51521 / SW)).